We begin with the raw amino-acid sequence, 817 residues long: Lon protease (817 aa).

The Lon N-terminal domain occupies 44 to 239 (LPILPLRNTV…ETLRYMNVEL (196 aa)). Position 390 to 397 (390 to 397 (GPPGVGKT)) interacts with ATP. The Lon proteolytic domain maps to 626-807 (NDVAGVVTGL…SEVLAIALTD (182 aa)). Catalysis depends on residues Ser713 and Lys756.

This sequence belongs to the peptidase S16 family. Homohexamer. Organized in a ring with a central cavity.

It is found in the cytoplasm. It catalyses the reaction Hydrolysis of proteins in presence of ATP.. Functionally, ATP-dependent serine protease that mediates the selective degradation of mutant and abnormal proteins as well as certain short-lived regulatory proteins. Required for cellular homeostasis and for survival from DNA damage and developmental changes induced by stress. Degrades polypeptides processively to yield small peptide fragments that are 5 to 10 amino acids long. Binds to DNA in a double-stranded, site-specific manner. This chain is Lon protease, found in Flavobacterium johnsoniae (strain ATCC 17061 / DSM 2064 / JCM 8514 / BCRC 14874 / CCUG 350202 / NBRC 14942 / NCIMB 11054 / UW101) (Cytophaga johnsonae).